The following is an 82-amino-acid chain: Ubiquinol-cytochrome-c reductase complex assembly factor 3 (82 aa).

The Mitochondrial matrix portion of the chain corresponds to 1-6; it reads METVRR. The chain crosses the membrane as a helical span at residues 7 to 29; it reads IVKGTLLLGFCTGIGGDLWVLVA. Residues 30 to 82 lie on the Mitochondrial intermembrane side of the membrane; sequence PGQERRLEMRMNYPEANPPMLAEAHKRNEMVLKVIEESAKTNENMARRSPWSS.

Belongs to the UQCC3 family. As to quaternary structure, associates with the ubiquinol-cytochrome c reductase complex (mitochondrial respiratory chain complex III or cytochrome b-c1 complex).

It localises to the mitochondrion inner membrane. Functionally, required for the assembly of the ubiquinol-cytochrome c reductase complex (mitochondrial respiratory chain complex III or cytochrome b-c1 complex), mediating cytochrome b recruitment and probably stabilization within the complex. Thereby, plays an important role in ATP production by mitochondria. Cardiolipin-binding protein, it may also control the cardiolipin composition of mitochondria membranes and their morphology. The chain is Ubiquinol-cytochrome-c reductase complex assembly factor 3 from Xenopus laevis (African clawed frog).